Reading from the N-terminus, the 325-residue chain is Syntaxin-16 (325 aa).

Over 1 to 301 (MATRRLTDAF…AEQYQKKNRK (301 aa)) the chain is Cytoplasmic. A Phosphoserine modification is found at serine 41. The 63-residue stretch at 230–292 (TLMVEERERE…EDGLKQLHKA (63 aa)) folds into the t-SNARE coiled-coil homology domain. A helical; Anchor for type IV membrane protein transmembrane segment spans residues 302–322 (MLVILILFVIIIVLIVVLVGV). Residues 323–325 (KSR) lie on the Vesicular side of the membrane.

This sequence belongs to the syntaxin family. In terms of assembly, interacts with GCC2. Interacts with BAIAP3; this interaction is increased in the presence of calcium. As to expression, ubiquitous.

It is found in the golgi apparatus membrane. It localises to the cytoplasm. In terms of biological role, SNARE involved in vesicular transport from the late endosomes to the trans-Golgi network. The protein is Syntaxin-16 (STX16) of Homo sapiens (Human).